A 324-amino-acid chain; its full sequence is MITSNRKPIVPDFMRPVAELEGQVEELKKLAPKNDIIINNKIARFQNQLVKLQKEIFSSLTPLQRLHLVRQSERPTTLDYIPGILDEWIELHGDRGGADDPALVGGIGKINGRNIVFIGHQRGRGTKENVARNFGMPAPGGYRKALRLMKHANRFGMPILTFIDTPGAWAGLKAEELGQGEAIAVNLREMFSFEVPIVCTIIGEGGSGGALGIGIGDSILMLEYAIYTVATPEACAAILWKNSKESLAAAEALKITSHDLKVLGIVDEILQEPLGGAQADPYTASQYLKKELTEQLDSLSKLDSQTLKKRRYEKFRRMGAFYEI.

The CoA carboxyltransferase C-terminal domain occupies 44-298 (RFQNQLVKLQ…KKELTEQLDS (255 aa)).

Belongs to the AccA family. As to quaternary structure, acetyl-CoA carboxylase is a heterohexamer composed of biotin carboxyl carrier protein (accB), biotin carboxylase (accC) and two subunits each of ACCase subunit alpha (accA) and ACCase subunit beta (accD).

The protein resides in the plastid. Its subcellular location is the chloroplast. It catalyses the reaction N(6)-carboxybiotinyl-L-lysyl-[protein] + acetyl-CoA = N(6)-biotinyl-L-lysyl-[protein] + malonyl-CoA. It functions in the pathway lipid metabolism; malonyl-CoA biosynthesis; malonyl-CoA from acetyl-CoA: step 1/1. In terms of biological role, component of the acetyl coenzyme A carboxylase (ACC) complex. First, biotin carboxylase catalyzes the carboxylation of biotin on its carrier protein (BCCP) and then the CO(2) group is transferred by the carboxyltransferase to acetyl-CoA to form malonyl-CoA. This is Acetyl-coenzyme A carboxylase carboxyl transferase subunit alpha from Pyropia yezoensis (Susabi-nori).